Consider the following 130-residue polypeptide: DNA-directed RNA polymerase subunit omega (130 aa).

The disordered stretch occupies residues 80–130 (PEPDTVPLIGSAGASVDADDTEVAPERMTEEELLKGLEGLAPPEEQPEEDE). Positions 103–114 (APERMTEEELLK) are enriched in basic and acidic residues.

Belongs to the RNA polymerase subunit omega family. In terms of assembly, the RNAP catalytic core consists of 2 alpha, 1 beta, 1 beta' and 1 omega subunit. When a sigma factor is associated with the core the holoenzyme is formed, which can initiate transcription.

It carries out the reaction RNA(n) + a ribonucleoside 5'-triphosphate = RNA(n+1) + diphosphate. In terms of biological role, promotes RNA polymerase assembly. Latches the N- and C-terminal regions of the beta' subunit thereby facilitating its interaction with the beta and alpha subunits. This is DNA-directed RNA polymerase subunit omega from Rhodopseudomonas palustris (strain BisB18).